Consider the following 180-residue polypeptide: Ribulose bisphosphate carboxylase small subunit, chloroplastic 2 (180 aa).

The N-terminal 56 residues, 1-56 (MASSVLSSAAVATVSRTPAQASMVAPFTGLKSTVGFPATKKNDDITSLASNGGRVQ), are a transit peptide targeting the chloroplast.

The protein belongs to the RuBisCO small chain family. In terms of assembly, heterohexadecamer of 8 large and 8 small subunits.

The protein resides in the plastid. Its subcellular location is the chloroplast. Its function is as follows. RuBisCO catalyzes two reactions: the carboxylation of D-ribulose 1,5-bisphosphate, the primary event in carbon dioxide fixation, as well as the oxidative fragmentation of the pentose substrate. Both reactions occur simultaneously and in competition at the same active site. Although the small subunit is not catalytic it is essential for maximal activity. The sequence is that of Ribulose bisphosphate carboxylase small subunit, chloroplastic 2 from Spinacia oleracea (Spinach).